Reading from the N-terminus, the 206-residue chain is MNFEQTHRDALTEVLRWRRDVRHFRPDPIDEAVIDRLRAVMDMAPSVGNARPWRVIRVDSPALRAEVLANFNAARAAAGSAYAGEQAEAYATLKLQGIDQAPLQLAVFTHRDPAAGHGLGRASMPVTLQQSTAMAFTRSGCRAGENLGLGMVSVLDPKAVERLLNAPPDWDFVAWLCIGVPEFTDDTPLLHRAGWQENLPTEWERR.

Residues 18–22, S46, L95, and S153 each bind FMN; that span reads RRDVR.

It belongs to the BluB family. Homooctamer.

The catalysed reaction is FMNH2 + O2 = dialurate + 5,6-dimethylbenzimidazole + D-erythrose 4-phosphate + H(+). Functionally, involved in the biosynthesis of cobalamin (vitamin B12). Catalyzes the oxidative fragmentation and contraction of the isoalloxazine heterocycle and the cleavage of the ribityl tail of FMNH(2) to form 5,6-dimethylbenzimidazole (DMB) and D-erythrose 4-phosphate (E4P). NAD(P)H is only required initially to reduce FMN and oxygen drives the oxidative fragmentation. The polypeptide is 5,6-dimethylbenzimidazole synthase (bluB) (Rhodobacter capsulatus (Rhodopseudomonas capsulata)).